The following is a 360-amino-acid chain: Phospho-N-acetylmuramoyl-pentapeptide-transferase (360 aa).

10 consecutive transmembrane segments (helical) span residues 26 to 46 (AILGLLTALVFSLWFGPKLIE), 74 to 94 (MGGLLILAAIFISVLLWGDLG), 97 to 117 (YVWVMLFVLGSFGLIGFIDDY), 134 to 154 (YILQSLAALLIAFFLYATAAN), 168 to 188 (VMPQLGAVFIVLAYFTIVGSS), 199 to 219 (GLAIMPTVMVAAAFALIAYLS), 236 to 256 (SGELVIVCTAIVGAGLGFLWF), 263 to 283 (VFMGDVGSLSLGAALGTIAVL), 288 to 308 (ILLVIMGGVFVMETLSVILQV), and 338 to 358 (VIVRFWIISIFLVLLGLATLK).

Belongs to the glycosyltransferase 4 family. MraY subfamily. Mg(2+) serves as cofactor.

The protein localises to the cell inner membrane. It catalyses the reaction UDP-N-acetyl-alpha-D-muramoyl-L-alanyl-gamma-D-glutamyl-meso-2,6-diaminopimeloyl-D-alanyl-D-alanine + di-trans,octa-cis-undecaprenyl phosphate = di-trans,octa-cis-undecaprenyl diphospho-N-acetyl-alpha-D-muramoyl-L-alanyl-D-glutamyl-meso-2,6-diaminopimeloyl-D-alanyl-D-alanine + UMP. It participates in cell wall biogenesis; peptidoglycan biosynthesis. Catalyzes the initial step of the lipid cycle reactions in the biosynthesis of the cell wall peptidoglycan: transfers peptidoglycan precursor phospho-MurNAc-pentapeptide from UDP-MurNAc-pentapeptide onto the lipid carrier undecaprenyl phosphate, yielding undecaprenyl-pyrophosphoryl-MurNAc-pentapeptide, known as lipid I. This chain is Phospho-N-acetylmuramoyl-pentapeptide-transferase, found in Shewanella baltica (strain OS195).